A 133-amino-acid polypeptide reads, in one-letter code: MAKPEGGAEPKVASPERVAAFRTGISAESRAAAYLMAKGYRILAKRYRTPHGEIDIVARRRNLIAFVEVKARASLDDAAYAVTPRQQQRIIDAAQGWLAAHPEHAEFELRFDAMLIAPRSLPRHVLAAFDAST.

The protein belongs to the UPF0102 family.

The sequence is that of UPF0102 protein bll0669 from Bradyrhizobium diazoefficiens (strain JCM 10833 / BCRC 13528 / IAM 13628 / NBRC 14792 / USDA 110).